The chain runs to 290 residues: BEL1-like homeodomain protein 11 (290 aa).

Residues 20-36 (SRYAKAVQCLVEEVIDI) form an SR/KY domain region. Residues 81 to 152 (ENHEIHIKIT…SLEEAIISQL (72 aa)) are BELL domain. Positions 202–264 (AWKPIRGLPE…NARVRLWKPM (63 aa)) form a DNA-binding region, homeobox.

It belongs to the TALE/BELL homeobox family. In terms of assembly, may form heterodimeric complexes with TALE/KNOX proteins.

The protein resides in the nucleus. The chain is BEL1-like homeodomain protein 11 (BLH11) from Arabidopsis thaliana (Mouse-ear cress).